A 370-amino-acid chain; its full sequence is Dual-specificity RNA methyltransferase RlmN (370 aa).

Glutamate 93 functions as the Proton acceptor in the catalytic mechanism. In terms of domain architecture, Radical SAM core spans 99 to 337; sequence EEGRGTLCVS…VTTVRKTRGD (239 aa). Cysteine 106 and cysteine 343 are joined by a disulfide. Residues cysteine 113, cysteine 117, and cysteine 120 each coordinate [4Fe-4S] cluster. S-adenosyl-L-methionine contacts are provided by residues 167-168, serine 199, 221-223, and asparagine 300; these read GE and SLH. Catalysis depends on cysteine 343, which acts as the S-methylcysteine intermediate.

The protein belongs to the radical SAM superfamily. RlmN family. The cofactor is [4Fe-4S] cluster.

The protein localises to the cytoplasm. It catalyses the reaction adenosine(2503) in 23S rRNA + 2 reduced [2Fe-2S]-[ferredoxin] + 2 S-adenosyl-L-methionine = 2-methyladenosine(2503) in 23S rRNA + 5'-deoxyadenosine + L-methionine + 2 oxidized [2Fe-2S]-[ferredoxin] + S-adenosyl-L-homocysteine. The catalysed reaction is adenosine(37) in tRNA + 2 reduced [2Fe-2S]-[ferredoxin] + 2 S-adenosyl-L-methionine = 2-methyladenosine(37) in tRNA + 5'-deoxyadenosine + L-methionine + 2 oxidized [2Fe-2S]-[ferredoxin] + S-adenosyl-L-homocysteine. In terms of biological role, specifically methylates position 2 of adenine 2503 in 23S rRNA and position 2 of adenine 37 in tRNAs. m2A2503 modification seems to play a crucial role in the proofreading step occurring at the peptidyl transferase center and thus would serve to optimize ribosomal fidelity. This chain is Dual-specificity RNA methyltransferase RlmN, found in Francisella tularensis subsp. tularensis (strain WY96-3418).